Reading from the N-terminus, the 483-residue chain is Protein nucleotidyltransferase YdiU (483 aa).

Positions 81, 83, 84, 103, 115, 116, 166, and 173 each coordinate ATP. Aspartate 244 (proton acceptor) is an active-site residue. Mg(2+) contacts are provided by asparagine 245 and aspartate 254. Aspartate 254 contacts ATP.

This sequence belongs to the SELO family. The cofactor is Mg(2+). Mn(2+) is required as a cofactor.

The enzyme catalyses L-seryl-[protein] + ATP = 3-O-(5'-adenylyl)-L-seryl-[protein] + diphosphate. It carries out the reaction L-threonyl-[protein] + ATP = 3-O-(5'-adenylyl)-L-threonyl-[protein] + diphosphate. The catalysed reaction is L-tyrosyl-[protein] + ATP = O-(5'-adenylyl)-L-tyrosyl-[protein] + diphosphate. It catalyses the reaction L-histidyl-[protein] + UTP = N(tele)-(5'-uridylyl)-L-histidyl-[protein] + diphosphate. The enzyme catalyses L-seryl-[protein] + UTP = O-(5'-uridylyl)-L-seryl-[protein] + diphosphate. It carries out the reaction L-tyrosyl-[protein] + UTP = O-(5'-uridylyl)-L-tyrosyl-[protein] + diphosphate. Nucleotidyltransferase involved in the post-translational modification of proteins. It can catalyze the addition of adenosine monophosphate (AMP) or uridine monophosphate (UMP) to a protein, resulting in modifications known as AMPylation and UMPylation. This is Protein nucleotidyltransferase YdiU from Shewanella pealeana (strain ATCC 700345 / ANG-SQ1).